Here is a 37-residue protein sequence, read N- to C-terminus: Pi-theraphotoxin-Hm3a (37 aa).

3 disulfides stabilise this stretch: cysteine 3–cysteine 18, cysteine 10–cysteine 23, and cysteine 17–cysteine 33.

It belongs to the psalmotoxin-1 family. As to expression, expressed by the venom gland.

The protein resides in the secreted. This toxin acts on different isoforms of acid-sensing ion channel ASIC1 in a similar manner to psalmotoxin-1 (AC P60514). On ASIC1a homotrimer, it provokes a pH-dependent inhibition (IC(50)=39.7 nM on human and IC(50)=1.3 nM on rat channels), whereas it potentiates ASIC1b homotrimer and ASIC1a-ASIC1b heterotrimer (EC(50)=178.1 nM on human ASIC1b, EC(50)=46.5 nM on rat ASIC1b and EC(50)=17.4 nM on rat ASIC1a-ASIC1b channels). On rat ASIC1a, it acts by inhibiting channel currents by shifting the pH of half-maximal effect (pH(50)) of steady-state desensitization and activation to more alkaline values. The chain is Pi-theraphotoxin-Hm3a from Heteroscodra maculata (Togo starburst tarantula).